Here is a 959-residue protein sequence, read N- to C-terminus: Protein moonraker (959 aa).

A disordered region spans residues 124 to 156 (LPHSSHKGMHTKVERKDSKSQDVCHCSHQPSRV). The span at 134–145 (TKVERKDSKSQD) shows a compositional bias: basic and acidic residues. Serine 279 carries the post-translational modification Phosphoserine. The segment covering 456–470 (EEAPRIEDNGTDFKD) has biased composition (basic and acidic residues). Disordered regions lie at residues 456 to 560 (EEAP…ASPK) and 572 to 610 (RDAA…AESS). A compositionally biased stretch (polar residues) spans 515-533 (PNQPYSKSRLQQTTVSSRL). Pro residues predominate over residues 547–558 (WIPPNPTSPPAS). A coiled-coil region spans residues 582 to 674 (QEDIHKESQL…TQLADKVEEA (93 aa)). Residues 583-599 (EDIHKESQLRGDAEQEA) are compositionally biased toward basic and acidic residues. Phosphoserine is present on serine 691. Disordered regions lie at residues 692–721 (SVEA…SDVP) and 848–883 (LDES…PLSV). Over residues 707–717 (AAAAAQPAEQA) the composition is skewed to low complexity. A compositionally biased stretch (basic and acidic residues) spans 857 to 874 (GSEKREAPLPLSREDLHQ). The tract at residues 877-959 (GQTPLSVPPR…FTSEFLEAAA (83 aa)) is necessary and sufficient for CEP20-binding.

Interacts with CEP63 and WDR62. Forms a complex with OFD1 and CEP20/FOR20. Interacts with PCM1.

The protein localises to the cytoplasm. It localises to the cytoskeleton. Its subcellular location is the microtubule organizing center. It is found in the centrosome. The protein resides in the centriolar satellite. Functionally, involved in centriole duplication. Positively regulates CEP63 centrosomal localization. Required for WDR62 centrosomal localization and promotes the centrosomal localization of CDK2. May play a role in cilium assembly. This is Protein moonraker (Kiaa0753) from Mus musculus (Mouse).